Consider the following 150-residue polypeptide: MQVLVDADACPAVIKDMLFRAARRAEICVTLVANQFLRTPPSPFIKAVQVPAGFDVADARIVELVEAGDLVITADIPLAAAVLDKGAHALDPRGNWFSRENIEERLSTRAMMDQLRSAGIDTGGPAPFSARDGKAFASQLDRFLARHGKP.

It belongs to the UPF0178 family.

This chain is UPF0178 protein Bcep18194_A4809, found in Burkholderia lata (strain ATCC 17760 / DSM 23089 / LMG 22485 / NCIMB 9086 / R18194 / 383).